Reading from the N-terminus, the 390-residue chain is Glutamate 5-kinase (390 aa).

Lysine 29 lines the ATP pocket. Substrate-binding residues include serine 69, aspartate 156, and asparagine 168. Residue 188–189 (TD) participates in ATP binding. Positions 295-374 (SGSLIVDAGA…EQFDRILGNN (80 aa)) constitute a PUA domain.

The protein belongs to the glutamate 5-kinase family.

The protein resides in the cytoplasm. The enzyme catalyses L-glutamate + ATP = L-glutamyl 5-phosphate + ADP. The protein operates within amino-acid biosynthesis; L-proline biosynthesis; L-glutamate 5-semialdehyde from L-glutamate: step 1/2. In terms of biological role, catalyzes the transfer of a phosphate group to glutamate to form L-glutamate 5-phosphate. This chain is Glutamate 5-kinase, found in Psychrobacter arcticus (strain DSM 17307 / VKM B-2377 / 273-4).